A 327-amino-acid polypeptide reads, in one-letter code: GMP reductase (327 aa).

Catalysis depends on Cys176, which acts as the Thioimidate intermediate. Ile205–Val228 is an NADP(+) binding site.

This sequence belongs to the IMPDH/GMPR family. GuaC type 2 subfamily.

The catalysed reaction is IMP + NH4(+) + NADP(+) = GMP + NADPH + 2 H(+). In terms of biological role, catalyzes the irreversible NADPH-dependent deamination of GMP to IMP. It functions in the conversion of nucleobase, nucleoside and nucleotide derivatives of G to A nucleotides, and in maintaining the intracellular balance of A and G nucleotides. This chain is GMP reductase, found in Streptococcus agalactiae serotype Ia (strain ATCC 27591 / A909 / CDC SS700).